The following is a 371-amino-acid chain: Alginate lyase (371 aa).

The first 28 residues, methionine 1–alanine 28, serve as a signal peptide directing secretion. Substrate-binding positions include serine 67 to lysine 68, histidine 140 to threonine 141, and tyrosine 258.

It belongs to the polysaccharide lyase 5 family.

It localises to the periplasm. The catalysed reaction is Eliminative cleavage of alginate to give oligosaccharides with 4-deoxy-alpha-L-erythro-hex-4-enuronosyl groups at their non-reducing ends and beta-D-mannuronate at their reducing end.. Catalyzes the depolymerization of alginate by cleaving the beta-1,4 glycosidic bond between two adjacent sugar residues via a beta-elimination mechanism. May serve to degrade mislocalized alginate that is trapped in the periplasmic space. The sequence is that of Alginate lyase from Pseudomonas putida (strain ATCC 47054 / DSM 6125 / CFBP 8728 / NCIMB 11950 / KT2440).